A 59-amino-acid polypeptide reads, in one-letter code: Mu-conotoxin SrVA (59 aa).

An N-terminal signal peptide occupies residues 1–22; the sequence is MRCLPVFVILLLLIASAPSVDA. The propeptide occupies 23 to 44; that stretch reads QLKTKDDVPLASFHDNAKGTQH. Cystine bridges form between cysteine 51–cysteine 58 and cysteine 52–cysteine 59.

The protein belongs to the conotoxin T superfamily. Expressed by the venom duct.

It localises to the secreted. Mu-conotoxins block voltage-gated sodium channels. This peptide inhibits the cardiac sodium channel hNav1.5/SCN5A (33% inhibition at 200 nM, 50% at 400 nM, and 55% at 600 nM). Does not interfere with the voltage-dependence of activation, but affects the voltage-dependence of inactivation of hNav1.5. In vivo, intracranial injection into 9-day-old mice causes transient symptoms, including extension of the body and clockwise and counter-clockwise turns, that last 3 to 4 minutes. Intracranial injection into 16-day-old mice, causes transient symptoms, including agitated breathing and occasional turning followed by scratching and grooming behavior, that last for 15-19 minutes. The protein is Mu-conotoxin SrVA of Conus spurius (Alphabet cone).